We begin with the raw amino-acid sequence, 257 residues long: Large ribosomal subunit protein uL2 (257 aa).

Residues 207-257 (VDHPHGGGNHQHVGHPTTLKRSSPPGQKAGKVAARRTGLIRGGNKEGAADN) are disordered.

It belongs to the universal ribosomal protein uL2 family. In terms of assembly, component of the large ribosomal subunit.

It is found in the cytoplasm. Component of the large ribosomal subunit. The ribosome is a large ribonucleoprotein complex responsible for the synthesis of proteins in the cell. This Entamoeba histolytica (strain ATCC 30459 / HM-1:IMSS / ABRM) protein is Large ribosomal subunit protein uL2 (RPL8).